The sequence spans 258 residues: E3 ubiquitin-protein ligase RNF170 (258 aa).

The Lumenal portion of the chain corresponds to 1-24 (MAKYQGEVQSLKLDDDSVIEGVSD). The chain crosses the membrane as a helical span at residues 25–45 (QVLVAVVVSFALIATLVYALF). The Cytoplasmic portion of the chain corresponds to 46-201 (RNVHQNIHPE…GGLFWMFRIR (156 aa)). The RING-type zinc finger occupies 87-130 (CPICLHQASFPVETNCGHLFCGACIIAYWRYGSWLGAISCPICR). The helical transmembrane segment at 202–222 (IILCLMGAFFYLISPLDFVPE) threads the bilayer. A223 is a topological domain (lumenal). The chain crosses the membrane as a helical span at residues 224 to 244 (LFGILGFLDDFFVIFLLLIYI). The Cytoplasmic portion of the chain corresponds to 245-258 (SIMYREVITQRLTR).

In terms of assembly, (Microbial infection) Interacts with human cytomegalovirus protein NEC2/UL50; this interaction promotes of UBA7 ubiquitination and subsequent proteasomal degradation. As to quaternary structure, constitutively associated with the ERLIN1/ERLIN 2 complex. Interacts with activated ITPR1. As to expression, expressed in the spinal cord.

It is found in the endoplasmic reticulum membrane. The catalysed reaction is S-ubiquitinyl-[E2 ubiquitin-conjugating enzyme]-L-cysteine + [acceptor protein]-L-lysine = [E2 ubiquitin-conjugating enzyme]-L-cysteine + N(6)-ubiquitinyl-[acceptor protein]-L-lysine.. The protein operates within protein modification; protein ubiquitination. Its function is as follows. E3 ubiquitin-protein ligase that plays an essential role in stimulus-induced inositol 1,4,5-trisphosphate receptor type 1 (ITPR1) ubiquitination and degradation via the endoplasmic reticulum-associated degradation (ERAD) pathway. Also involved in ITPR1 turnover in resting cells. Selectively inhibits the TLR3-triggered innate immune response by promoting the 'Lys-48'-linked polyubiquitination and degradation of TLR3. This chain is E3 ubiquitin-protein ligase RNF170 (RNF170), found in Homo sapiens (Human).